Here is a 440-residue protein sequence, read N- to C-terminus: 23S rRNA (uracil(1939)-C(5))-methyltransferase RlmD (440 aa).

Residues Met1–Ile21 form a disordered region. The TRAM domain occupies Pro15–Asn73. Positions 86, 92, 95, and 169 each coordinate [4Fe-4S] cluster. Residues Gln273, Phe302, Asn307, Glu323, Asp350, and Asp370 each contribute to the S-adenosyl-L-methionine site. The active-site Nucleophile is the Cys396.

The protein belongs to the class I-like SAM-binding methyltransferase superfamily. RNA M5U methyltransferase family. RlmD subfamily.

It catalyses the reaction uridine(1939) in 23S rRNA + S-adenosyl-L-methionine = 5-methyluridine(1939) in 23S rRNA + S-adenosyl-L-homocysteine + H(+). Its function is as follows. Catalyzes the formation of 5-methyl-uridine at position 1939 (m5U1939) in 23S rRNA. The protein is 23S rRNA (uracil(1939)-C(5))-methyltransferase RlmD of Marinomonas sp. (strain MWYL1).